A 324-amino-acid polypeptide reads, in one-letter code: Lipid droplet-associated hydrolase (324 aa).

The active-site Nucleophile is Ser-136. Catalysis depends on charge relay system residues Asp-270 and His-299.

It belongs to the AB hydrolase superfamily. LDAH family.

The protein localises to the lipid droplet. It is found in the endoplasmic reticulum. It catalyses the reaction a cholesterol ester + H2O = cholesterol + a fatty acid + H(+). Functionally, probable serine lipid hydrolase associated with lipid droplets. Has low cholesterol esterase activity. Appears to lack triglyceride lipase activity. Involved in cholesterol and triglyceride homeostasis; stimulates cellular triglyceride accumulation and cellular cholesterol release. The protein is Lipid droplet-associated hydrolase of Gallus gallus (Chicken).